Reading from the N-terminus, the 130-residue chain is Protein ApaG (130 aa).

In terms of domain architecture, ApaG spans 3 to 127; sequence RATTRKIQVT…FSLDVPHMAR (125 aa).

In Azorhizobium caulinodans (strain ATCC 43989 / DSM 5975 / JCM 20966 / LMG 6465 / NBRC 14845 / NCIMB 13405 / ORS 571), this protein is Protein ApaG.